The following is a 394-amino-acid chain: NAD(P)H-quinone oxidoreductase subunit H (394 aa).

Belongs to the complex I 49 kDa subunit family. NDH-1 can be composed of about 15 different subunits; different subcomplexes with different compositions have been identified which probably have different functions.

The protein localises to the cellular thylakoid membrane. It carries out the reaction a plastoquinone + NADH + (n+1) H(+)(in) = a plastoquinol + NAD(+) + n H(+)(out). The enzyme catalyses a plastoquinone + NADPH + (n+1) H(+)(in) = a plastoquinol + NADP(+) + n H(+)(out). NDH-1 shuttles electrons from an unknown electron donor, via FMN and iron-sulfur (Fe-S) centers, to quinones in the respiratory and/or the photosynthetic chain. The immediate electron acceptor for the enzyme in this species is believed to be plastoquinone. Couples the redox reaction to proton translocation, and thus conserves the redox energy in a proton gradient. Cyanobacterial NDH-1 also plays a role in inorganic carbon-concentration. The chain is NAD(P)H-quinone oxidoreductase subunit H from Thermosynechococcus vestitus (strain NIES-2133 / IAM M-273 / BP-1).